Here is a 417-residue protein sequence, read N- to C-terminus: Histidine--tRNA ligase (417 aa).

Belongs to the class-II aminoacyl-tRNA synthetase family. In terms of assembly, homodimer.

The protein localises to the cytoplasm. It carries out the reaction tRNA(His) + L-histidine + ATP = L-histidyl-tRNA(His) + AMP + diphosphate + H(+). The protein is Histidine--tRNA ligase of Oleidesulfovibrio alaskensis (strain ATCC BAA-1058 / DSM 17464 / G20) (Desulfovibrio alaskensis).